The chain runs to 570 residues: Sulfite reductase [NADPH] hemoprotein beta-component (570 aa).

[4Fe-4S] cluster is bound by residues C434, C440, C479, and C483. C483 is a binding site for siroheme.

It belongs to the nitrite and sulfite reductase 4Fe-4S domain family. As to quaternary structure, alpha(8)-beta(8). The alpha component is a flavoprotein, the beta component is a hemoprotein. Siroheme serves as cofactor. The cofactor is [4Fe-4S] cluster.

It catalyses the reaction hydrogen sulfide + 3 NADP(+) + 3 H2O = sulfite + 3 NADPH + 4 H(+). It functions in the pathway sulfur metabolism; hydrogen sulfide biosynthesis; hydrogen sulfide from sulfite (NADPH route): step 1/1. Functionally, component of the sulfite reductase complex that catalyzes the 6-electron reduction of sulfite to sulfide. This is one of several activities required for the biosynthesis of L-cysteine from sulfate. This chain is Sulfite reductase [NADPH] hemoprotein beta-component, found in Salmonella typhi.